Consider the following 546-residue polypeptide: Zinc finger and BTB domain-containing protein 7A (546 aa).

The 68-residue stretch at 34–101 folds into the BTB domain; it reads CDVVILVEGQ…AYTATLTVST (68 aa). The interval 189 to 288 is disordered; the sequence is QEDEEEPDCN…SFVPTGAEAE (100 aa). 3 C2H2-type zinc fingers span residues 359 to 381, 387 to 409, and 415 to 437; these read QKCP…IRTH, YECN…MRKH, and YLCQ…MRVH. Residues 443 to 467 form a C2H2-type 4; atypical zinc finger; the sequence is YQCDSCFKTFVRSDHLHRHLKKDGC. The interval 463–546 is disordered; that stretch reads KKDGCNGIPS…AAEGSAPGPS (84 aa). Low complexity predominate over residues 534 to 546; the sequence is AGGAAEGSAPGPS.

Its subcellular location is the nucleus. Transcription factor that represses the transcription of a wide range of genes involved in cell proliferation and differentiation. Directly and specifically binds to the consensus sequence 5'-[GA][CA]GACCCCCCCCC-3' and represses transcription both by regulating the organization of chromatin and through the direct recruitment of transcription factors to gene regulatory regions. May also play a role, independently of its transcriptional activity, in double-strand break repair via classical non-homologous end joining/cNHEJ and in alternative splicing. The polypeptide is Zinc finger and BTB domain-containing protein 7A (Gallus gallus (Chicken)).